The following is a 483-amino-acid chain: Glutamyl-tRNA(Gln) amidotransferase subunit A (483 aa).

Catalysis depends on charge relay system residues Lys77 and Ser152. Ser176 acts as the Acyl-ester intermediate in catalysis.

Belongs to the amidase family. GatA subfamily. Heterotrimer of A, B and C subunits.

It carries out the reaction L-glutamyl-tRNA(Gln) + L-glutamine + ATP + H2O = L-glutaminyl-tRNA(Gln) + L-glutamate + ADP + phosphate + H(+). Functionally, allows the formation of correctly charged Gln-tRNA(Gln) through the transamidation of misacylated Glu-tRNA(Gln) in organisms which lack glutaminyl-tRNA synthetase. The reaction takes place in the presence of glutamine and ATP through an activated gamma-phospho-Glu-tRNA(Gln). The polypeptide is Glutamyl-tRNA(Gln) amidotransferase subunit A (Listeria welshimeri serovar 6b (strain ATCC 35897 / DSM 20650 / CCUG 15529 / CIP 8149 / NCTC 11857 / SLCC 5334 / V8)).